We begin with the raw amino-acid sequence, 253 residues long: Methionine aminopeptidase (253 aa).

His78 contributes to the substrate binding site. A divalent metal cation-binding residues include Asp95, Asp106, and His169. His176 is a substrate binding site. Glu206 and Glu237 together coordinate a divalent metal cation.

The protein belongs to the peptidase M24A family. Methionine aminopeptidase type 1 subfamily. In terms of assembly, monomer. Co(2+) serves as cofactor. The cofactor is Zn(2+). It depends on Mn(2+) as a cofactor. Requires Fe(2+) as cofactor.

It carries out the reaction Release of N-terminal amino acids, preferentially methionine, from peptides and arylamides.. Removes the N-terminal methionine from nascent proteins. The N-terminal methionine is often cleaved when the second residue in the primary sequence is small and uncharged (Met-Ala-, Cys, Gly, Pro, Ser, Thr, or Val). Requires deformylation of the N(alpha)-formylated initiator methionine before it can be hydrolyzed. This chain is Methionine aminopeptidase, found in Helicobacter pylori (strain ATCC 700392 / 26695) (Campylobacter pylori).